Here is a 360-residue protein sequence, read N- to C-terminus: Phosphate acyltransferase (360 aa).

This sequence belongs to the PlsX family. Homodimer. Probably interacts with PlsY.

It localises to the cytoplasm. The enzyme catalyses a fatty acyl-[ACP] + phosphate = an acyl phosphate + holo-[ACP]. The protein operates within lipid metabolism; phospholipid metabolism. In terms of biological role, catalyzes the reversible formation of acyl-phosphate (acyl-PO(4)) from acyl-[acyl-carrier-protein] (acyl-ACP). This enzyme utilizes acyl-ACP as fatty acyl donor, but not acyl-CoA. The protein is Phosphate acyltransferase of Caulobacter vibrioides (strain ATCC 19089 / CIP 103742 / CB 15) (Caulobacter crescentus).